We begin with the raw amino-acid sequence, 1755 residues long: Transposon Ty1-ER1 Gag-Pol polyprotein (1755 aa).

Polar residues-rich tracts occupy residues 1-23, 48-60, and 127-152; these read MESQ…SVTS, TKAN…TPAS, and QSQF…GNTF. 3 disordered regions span residues 1 to 93, 126 to 174, and 352 to 421; these read MESQ…MMTQ, PQSQ…PPPM, and GSRN…SKST. The segment covering 153–165 has biased composition (low complexity); that stretch reads TDSSSADSDMTST. Positions 299 to 401 are RNA-binding; sequence NNGIHINNKV…NSKSKTARAH (103 aa). Residues 402–418 show a composition bias toward low complexity; the sequence is NVSTSNNSPSTDNDSIS. Ser-416 carries the phosphoserine modification. Asp-461 functions as the For protease activity; shared with dimeric partner in the catalytic mechanism. The integrase-type zinc finger-like stretch occupies residues 583–640; sequence NVHTSESTRKYPYPFIHRMLAHANAQTIRYSLKNNTITYFNESDVDWSSAIDYQCPDC. In terms of domain architecture, Integrase catalytic spans 660 to 835; the sequence is NSYEPFQYLH…AGLDISTLLP (176 aa). 2 residues coordinate Mg(2+): Asp-671 and Asp-736. Disordered stretches follow at residues 956–1087, 1092–1111, and 1130–1171; these read SKAV…ETEK, RSPS…NIVP, and DLPL…DSNA. Residues 960 to 969 show a composition bias toward low complexity; that stretch reads SPTDSTPPST. A compositionally biased stretch (polar residues) spans 1005-1015; it reads STPQISNIEST. A compositionally biased stretch (basic and acidic residues) spans 1038-1053; sequence ESSHASKSKDFRHSDS. Polar residues-rich tracts occupy residues 1054 to 1082 and 1101 to 1111; these read YSEN…QISD and PENNSSHNIVP. The short motif at 1178–1212 is the Bipartite nuclear localization signal element; the sequence is KKRSLEDNETEIKVSRDTWNTKNMRSLEPPRSKKR. Residues 1338–1476 enclose the Reverse transcriptase Ty1/copia-type domain; the sequence is NNYYITQLDI…DILGLEIKYQ (139 aa). Positions 1346, 1427, 1428, 1610, 1652, and 1685 each coordinate Mg(2+). Residues 1610–1752 enclose the RNase H Ty1/copia-type domain; that stretch reads DASYGNQPYY…IKTFKLLTNK (143 aa).

The capsid protein forms a homotrimer, from which the VLPs are assembled. The protease is a homodimer, whose active site consists of two apposed aspartic acid residues. In terms of processing, initially, virus-like particles (VLPs) are composed of the structural unprocessed proteins Gag and Gag-Pol, and also contain the host initiator methionine tRNA (tRNA(i)-Met) which serves as a primer for minus-strand DNA synthesis, and a dimer of genomic Ty RNA. Processing of the polyproteins occurs within the particle and proceeds by an ordered pathway, called maturation. First, the protease (PR) is released by autocatalytic cleavage of the Gag-Pol polyprotein yielding capsid protein p45 and a Pol-p154 precursor protein. This cleavage is a prerequisite for subsequent processing of Pol-p154 at the remaining sites to release the mature structural and catalytic proteins. Maturation takes place prior to the RT reaction and is required to produce transposition-competent VLPs.

The protein resides in the cytoplasm. It localises to the nucleus. The enzyme catalyses DNA(n) + a 2'-deoxyribonucleoside 5'-triphosphate = DNA(n+1) + diphosphate. The catalysed reaction is Endonucleolytic cleavage to 5'-phosphomonoester.. Functionally, capsid protein (CA) is the structural component of the virus-like particle (VLP), forming the shell that encapsulates the retrotransposons dimeric RNA genome. The particles are assembled from trimer-clustered units and there are holes in the capsid shells that allow for the diffusion of macromolecules. CA also has nucleocapsid-like chaperone activity, promoting primer tRNA(i)-Met annealing to the multipartite primer-binding site (PBS), dimerization of Ty1 RNA and initiation of reverse transcription. Its function is as follows. The aspartyl protease (PR) mediates the proteolytic cleavages of the Gag and Gag-Pol polyproteins after assembly of the VLP. In terms of biological role, reverse transcriptase/ribonuclease H (RT) is a multifunctional enzyme that catalyzes the conversion of the retro-elements RNA genome into dsDNA within the VLP. The enzyme displays a DNA polymerase activity that can copy either DNA or RNA templates, and a ribonuclease H (RNase H) activity that cleaves the RNA strand of RNA-DNA heteroduplexes during plus-strand synthesis and hydrolyzes RNA primers. The conversion leads to a linear dsDNA copy of the retrotransposon that includes long terminal repeats (LTRs) at both ends. Integrase (IN) targets the VLP to the nucleus, where a subparticle preintegration complex (PIC) containing at least integrase and the newly synthesized dsDNA copy of the retrotransposon must transit the nuclear membrane. Once in the nucleus, integrase performs the integration of the dsDNA into the host genome. This is Transposon Ty1-ER1 Gag-Pol polyprotein (TY1B-ER1) from Saccharomyces cerevisiae (strain ATCC 204508 / S288c) (Baker's yeast).